A 695-amino-acid chain; its full sequence is Polyribonucleotide nucleotidyltransferase (695 aa).

2 residues coordinate Mg(2+): Asp486 and Asp492. Residues 553-612 (PRMIVFKINPEKIRDVIGKGGATIRALTEETGTTIDIVDDGTVKIFSADKADGQEAKRRV) form the KH domain. An S1 motif domain is found at 622–690 (GKIYEGRVSR…KQGRVRLSVK (69 aa)).

Belongs to the polyribonucleotide nucleotidyltransferase family. In terms of assembly, component of the RNA degradosome, which is a multiprotein complex involved in RNA processing and mRNA degradation. The cofactor is Mg(2+).

The protein localises to the cytoplasm. The catalysed reaction is RNA(n+1) + phosphate = RNA(n) + a ribonucleoside 5'-diphosphate. In terms of biological role, involved in mRNA degradation. Catalyzes the phosphorolysis of single-stranded polyribonucleotides processively in the 3'- to 5'-direction. This Nitrosococcus oceani (strain ATCC 19707 / BCRC 17464 / JCM 30415 / NCIMB 11848 / C-107) protein is Polyribonucleotide nucleotidyltransferase.